The sequence spans 330 residues: DNA primase small subunit PriS (330 aa).

Active-site residues include Asp101 and Asp103. Zn(2+) is bound by residues Cys116, Cys119, Cys128, and Asp131. The active site involves Asp235.

It belongs to the eukaryotic-type primase small subunit family. As to quaternary structure, heterodimer of a small subunit (PriS) and a large subunit (PriL). Requires Mg(2+) as cofactor. It depends on Mn(2+) as a cofactor.

Functionally, catalytic subunit of DNA primase, an RNA polymerase that catalyzes the synthesis of short RNA molecules used as primers for DNA polymerase during DNA replication. The small subunit contains the primase catalytic core and has DNA synthesis activity on its own. Binding to the large subunit stabilizes and modulates the activity, increasing the rate of DNA synthesis while decreasing the length of the DNA fragments, and conferring RNA synthesis capability. The DNA polymerase activity may enable DNA primase to also catalyze primer extension after primer synthesis. May also play a role in DNA repair. This chain is DNA primase small subunit PriS, found in Saccharolobus islandicus (strain M.16.27) (Sulfolobus islandicus).